Here is a 756-residue protein sequence, read N- to C-terminus: 5-methyltetrahydropteroyltriglutamate--homocysteine methyltransferase (756 aa).

Residues 16–19 (RELK) and K116 contribute to the 5-methyltetrahydropteroyltri-L-glutamate site. Residues 435–437 (IGS) and E488 each bind L-homocysteine. L-methionine-binding positions include 435–437 (IGS) and E488. Residues 519-520 (RC) and W565 each bind 5-methyltetrahydropteroyltri-L-glutamate. D603 contributes to the L-homocysteine binding site. L-methionine is bound at residue D603. E609 provides a ligand contact to 5-methyltetrahydropteroyltri-L-glutamate. Residues H645, C647, and E669 each contribute to the Zn(2+) site. Residue H698 is the Proton donor of the active site. C730 serves as a coordination point for Zn(2+).

It belongs to the vitamin-B12 independent methionine synthase family. Requires Zn(2+) as cofactor.

The catalysed reaction is 5-methyltetrahydropteroyltri-L-glutamate + L-homocysteine = tetrahydropteroyltri-L-glutamate + L-methionine. The protein operates within amino-acid biosynthesis; L-methionine biosynthesis via de novo pathway; L-methionine from L-homocysteine (MetE route): step 1/1. Functionally, catalyzes the transfer of a methyl group from 5-methyltetrahydrofolate to homocysteine resulting in methionine formation. This Marinobacter nauticus (strain ATCC 700491 / DSM 11845 / VT8) (Marinobacter aquaeolei) protein is 5-methyltetrahydropteroyltriglutamate--homocysteine methyltransferase.